We begin with the raw amino-acid sequence, 377 residues long: Ribosomal RNA large subunit methyltransferase G (377 aa).

This sequence belongs to the methyltransferase superfamily. RlmG family.

The protein resides in the cytoplasm. The enzyme catalyses guanosine(1835) in 23S rRNA + S-adenosyl-L-methionine = N(2)-methylguanosine(1835) in 23S rRNA + S-adenosyl-L-homocysteine + H(+). Its function is as follows. Specifically methylates the guanine in position 1835 (m2G1835) of 23S rRNA. The chain is Ribosomal RNA large subunit methyltransferase G from Aeromonas salmonicida (strain A449).